A 314-amino-acid chain; its full sequence is Ficolin-2 (314 aa).

Residues 1–17 form the signal peptide; sequence MALGSAALFVLTLTVHA. The Collagen-like domain occupies 40–96; sequence GCPGLPGAAGPKGEAGAKGDRGESGLPGIPGKEGPTGPKGNQGEKGIRGEKGDSGPS. The interval 49-101 is disordered; the sequence is GPKGEAGAKGDRGESGLPGIPGKEGPTGPKGNQGEKGIRGEKGDSGPSQSCAT. The 218-residue stretch at 97–314 folds into the Fibrinogen C-terminal domain; it reads QSCATGPRTC…KVSEMKVRLI (218 aa). Intrachain disulfides connect Cys-99–Cys-127 and Cys-106–Cys-134. Ca(2+)-binding residues include Asp-250, Asp-252, Ser-254, and Ser-256. Cys-258 and Cys-271 are oxidised to a cystine. Residue Asn-301 is glycosylated (N-linked (GlcNAc...) asparagine).

It belongs to the ficolin lectin family. As to quaternary structure, homotrimer. Interacts with elastin. Interacts with MASP1 and MASP2.

The protein localises to the secreted. In terms of biological role, may function in innate immunity through activation of the lectin complement pathway. Calcium-dependent and GlcNAc-binding lectin. This is Ficolin-2 (Fcn2) from Mus musculus (Mouse).